Reading from the N-terminus, the 706-residue chain is Vitamin B12-dependent ribonucleoside-diphosphate reductase (706 aa).

One can recognise an ATP-cone domain in the interval 21-109 (AKVRRRDGTL…IYRQRRAELR (89 aa)). Residues Ser191, 206 to 207 (GC), Gly235, 389 to 393 (NPCGE), and 534 to 538 (PTGTI) each bind substrate. Cysteines 207 and 402 form a disulfide. Asn389 (proton acceptor) is an active-site residue. The active-site Cysteine radical intermediate is Cys391. Glu393 (proton acceptor) is an active-site residue.

This sequence belongs to the ribonucleoside diphosphate reductase class-2 family. The cofactor is adenosylcob(III)alamin.

It carries out the reaction a 2'-deoxyribonucleoside 5'-diphosphate + [thioredoxin]-disulfide + H2O = a ribonucleoside 5'-diphosphate + [thioredoxin]-dithiol. In terms of biological role, provides the precursors necessary for DNA synthesis. Catalyzes the biosynthesis of deoxyribonucleotides from the corresponding ribonucleotides. This Mycobacterium tuberculosis (strain ATCC 25618 / H37Rv) protein is Vitamin B12-dependent ribonucleoside-diphosphate reductase (nrdZ).